A 182-amino-acid chain; its full sequence is Adenine phosphoribosyltransferase (182 aa).

It belongs to the purine/pyrimidine phosphoribosyltransferase family. In terms of assembly, homodimer.

Its subcellular location is the cytoplasm. The enzyme catalyses AMP + diphosphate = 5-phospho-alpha-D-ribose 1-diphosphate + adenine. It participates in purine metabolism; AMP biosynthesis via salvage pathway; AMP from adenine: step 1/1. In terms of biological role, catalyzes a salvage reaction resulting in the formation of AMP, that is energically less costly than de novo synthesis. The chain is Adenine phosphoribosyltransferase from Pseudomonas aeruginosa (strain LESB58).